The sequence spans 140 residues: Nucleoside diphosphate kinase (140 aa).

6 residues coordinate ATP: K11, F59, R87, T93, R104, and N114. The Pros-phosphohistidine intermediate role is filled by H117.

It belongs to the NDK family. In terms of assembly, homotetramer. Requires Mg(2+) as cofactor.

It localises to the cytoplasm. It carries out the reaction a 2'-deoxyribonucleoside 5'-diphosphate + ATP = a 2'-deoxyribonucleoside 5'-triphosphate + ADP. The catalysed reaction is a ribonucleoside 5'-diphosphate + ATP = a ribonucleoside 5'-triphosphate + ADP. In terms of biological role, major role in the synthesis of nucleoside triphosphates other than ATP. The ATP gamma phosphate is transferred to the NDP beta phosphate via a ping-pong mechanism, using a phosphorylated active-site intermediate. The protein is Nucleoside diphosphate kinase of Francisella tularensis subsp. holarctica (strain LVS).